The chain runs to 280 residues: Protoheme IX farnesyltransferase (280 aa).

Transmembrane regions (helical) follow at residues valine 2–leucine 21, alanine 30–glycine 50, leucine 83–valine 103, alanine 105–leucine 125, leucine 131–valine 151, phenylalanine 160–phenylalanine 180, isoleucine 206–alanine 226, valine 229–leucine 249, and glutamine 260–alanine 280.

This sequence belongs to the UbiA prenyltransferase family. Protoheme IX farnesyltransferase subfamily.

Its subcellular location is the cell inner membrane. It catalyses the reaction heme b + (2E,6E)-farnesyl diphosphate + H2O = Fe(II)-heme o + diphosphate. Its pathway is porphyrin-containing compound metabolism; heme O biosynthesis; heme O from protoheme: step 1/1. In terms of biological role, converts heme B (protoheme IX) to heme O by substitution of the vinyl group on carbon 2 of heme B porphyrin ring with a hydroxyethyl farnesyl side group. The protein is Protoheme IX farnesyltransferase of Sorangium cellulosum (strain So ce56) (Polyangium cellulosum (strain So ce56)).